A 173-amino-acid polypeptide reads, in one-letter code: FVQSALSQCLGRVDRRIIGGCGLEAPFAWDGALGWDGLRGWDAPYGCGLAAPAIDFSPTSGGALPVSSASAIAPVGLAVASENVYEGILAAAGELPFVGTVGVEGILPTAGAGAVHHSCGNGLNEMASRDAAFVPRFADAYGIGLGAYGLEVPVLGAPALGYRAGWKGCGCGL.

The N-terminal stretch at 1–7 is a signal peptide; sequence FVQSALS.

The protein belongs to the chorion protein family.

This protein is one of many from the eggshell of the gypsy moth. The polypeptide is Chorion class B protein Ld32 (Lymantria dispar (Gypsy moth)).